An 89-amino-acid polypeptide reads, in one-letter code: Transcription elongation factor 1 homolog (89 aa).

Zn(2+)-binding residues include Cys25, Cys28, Cys49, and Cys52.

Belongs to the ELOF1 family.

The protein localises to the nucleus. In terms of biological role, transcription elongation factor implicated in the maintenance of proper chromatin structure in actively transcribed regions. The protein is Transcription elongation factor 1 homolog of Oryza sativa subsp. japonica (Rice).